The sequence spans 205 residues: ATP phosphoribosyltransferase (205 aa).

This sequence belongs to the ATP phosphoribosyltransferase family. Short subfamily. As to quaternary structure, heteromultimer composed of HisG and HisZ subunits.

The protein resides in the cytoplasm. It catalyses the reaction 1-(5-phospho-beta-D-ribosyl)-ATP + diphosphate = 5-phospho-alpha-D-ribose 1-diphosphate + ATP. It participates in amino-acid biosynthesis; L-histidine biosynthesis; L-histidine from 5-phospho-alpha-D-ribose 1-diphosphate: step 1/9. Its function is as follows. Catalyzes the condensation of ATP and 5-phosphoribose 1-diphosphate to form N'-(5'-phosphoribosyl)-ATP (PR-ATP). Has a crucial role in the pathway because the rate of histidine biosynthesis seems to be controlled primarily by regulation of HisG enzymatic activity. The sequence is that of ATP phosphoribosyltransferase from Ruthia magnifica subsp. Calyptogena magnifica.